We begin with the raw amino-acid sequence, 219 residues long: Charged multivesicular body protein 5 (219 aa).

Residues 1 to 10 show a composition bias toward basic residues; that stretch reads MNRFFGKAKP. Residues 1–21 are disordered; that stretch reads MNRFFGKAKPKAPPPSLTDCI. Positions 26–179 form a coiled coil; it reads SRAESIDKKI…LGDELLADED (154 aa). A Phosphoserine modification is found at Ser-86. Residues 188–219 are disordered; that stretch reads SAPAIPEGVPTDTKNKDGVLVDEFGLPQIPAS.

The protein belongs to the SNF7 family. As to quaternary structure, probable peripherally associated component of the endosomal sorting required for transport complex III (ESCRT-III). ESCRT-III components are thought to multimerize to form a flat lattice on the perimeter membrane of the endosome. Several assembly forms of ESCRT-III may exist that interact and act sequentially. Interacts with VTA1. Interacts with CHMP2A. Interacts with VTA1; the interaction involves soluble CHMP5. Interacts with NOD2. Interacts with BROX. Post-translationally, ISGylated. Isgylation inhibits its interaction with VTA1.

It localises to the cytoplasm. Its subcellular location is the cytosol. The protein resides in the endosome membrane. The protein localises to the midbody. Functionally, probable peripherally associated component of the endosomal sorting required for transport complex III (ESCRT-III) which is involved in multivesicular bodies (MVBs) formation and sorting of endosomal cargo proteins into MVBs. MVBs contain intraluminal vesicles (ILVs) that are generated by invagination and scission from the limiting membrane of the endosome and mostly are delivered to lysosomes enabling degradation of membrane proteins, such as stimulated growth factor receptors, lysosomal enzymes and lipids. The MVB pathway appears to require the sequential function of ESCRT-O, -I,-II and -III complexes. ESCRT-III proteins mostly dissociate from the invaginating membrane before the ILV is released. The ESCRT machinery also functions in topologically equivalent membrane fission events, such as the terminal stages of cytokinesis. ESCRT-III proteins are believed to mediate the necessary vesicle extrusion and/or membrane fission activities, possibly in conjunction with the AAA ATPase VPS4. This chain is Charged multivesicular body protein 5 (Chmp5), found in Mus musculus (Mouse).